We begin with the raw amino-acid sequence, 128 residues long: L-ectoine synthase (128 aa).

The protein belongs to the ectoine synthase family.

The catalysed reaction is (2S)-4-acetamido-2-aminobutanoate = L-ectoine + H2O. It participates in amine and polyamine biosynthesis; ectoine biosynthesis; L-ectoine from L-aspartate 4-semialdehyde: step 3/3. In terms of biological role, catalyzes the circularization of gamma-N-acetyl-alpha,gamma-diaminobutyric acid (ADABA) to ectoine (1,4,5,6-tetrahydro-2-methyl-4-pyrimidine carboxylic acid), which is an excellent osmoprotectant. The sequence is that of L-ectoine synthase from Oceanobacillus iheyensis (strain DSM 14371 / CIP 107618 / JCM 11309 / KCTC 3954 / HTE831).